The following is an 853-amino-acid chain: DNA mismatch repair protein MutS (853 aa).

613–620 provides a ligand contact to ATP; it reads GPNMGGKS.

Belongs to the DNA mismatch repair MutS family.

Functionally, this protein is involved in the repair of mismatches in DNA. It is possible that it carries out the mismatch recognition step. This protein has a weak ATPase activity. The polypeptide is DNA mismatch repair protein MutS (Vibrio parahaemolyticus serotype O3:K6 (strain RIMD 2210633)).